The chain runs to 957 residues: Glycine dehydrogenase (decarboxylating) (957 aa).

Residue Lys708 is modified to N6-(pyridoxal phosphate)lysine.

The protein belongs to the GcvP family. In terms of assembly, the glycine cleavage system is composed of four proteins: P, T, L and H. Requires pyridoxal 5'-phosphate as cofactor.

It carries out the reaction N(6)-[(R)-lipoyl]-L-lysyl-[glycine-cleavage complex H protein] + glycine + H(+) = N(6)-[(R)-S(8)-aminomethyldihydrolipoyl]-L-lysyl-[glycine-cleavage complex H protein] + CO2. Functionally, the glycine cleavage system catalyzes the degradation of glycine. The P protein binds the alpha-amino group of glycine through its pyridoxal phosphate cofactor; CO(2) is released and the remaining methylamine moiety is then transferred to the lipoamide cofactor of the H protein. The chain is Glycine dehydrogenase (decarboxylating) from Salmonella agona (strain SL483).